Reading from the N-terminus, the 678-residue chain is DNA gyrase subunit B (678 aa).

The Toprim domain occupies 456 to 570; that stretch reads SELYVVEGDS…HGYVFLAQPP (115 aa). 3 residues coordinate Mg(2+): glutamate 462, aspartate 535, and aspartate 537.

It belongs to the type II topoisomerase GyrB family. In terms of assembly, heterotetramer, composed of two GyrA and two GyrB chains. In the heterotetramer, GyrA contains the active site tyrosine that forms a transient covalent intermediate with the DNA, while GyrB binds cofactors catalyzes ATP hydrolysis. The cofactor is Mg(2+). It depends on Mn(2+) as a cofactor. Ca(2+) serves as cofactor.

The protein localises to the cytoplasm. The enzyme catalyses ATP-dependent breakage, passage and rejoining of double-stranded DNA.. DNA supercoiling is inhibited by fluoroquinolones; IC(50) 1 ug/ml for sitafloxacin. A type II topoisomerase that negatively supercoils closed circular double-stranded (ds) DNA in an ATP-dependent manner to modulate DNA topology and maintain chromosomes in an underwound state. Negative supercoiling favors strand separation, and DNA replication, transcription, recombination and repair, all of which involve strand separation. Also able to catalyze the interconversion of other topological isomers of dsDNA rings, including catenanes and knotted rings. Type II topoisomerases break and join 2 DNA strands simultaneously in an ATP-dependent manner. The polypeptide is DNA gyrase subunit B (Mycobacterium leprae (strain TN)).